A 205-amino-acid chain; its full sequence is Fe/S biogenesis protein NfuA (205 aa).

Residues Cys162 and Cys165 each coordinate [4Fe-4S] cluster.

This sequence belongs to the NfuA family. Homodimer. The cofactor is [4Fe-4S] cluster.

Involved in iron-sulfur cluster biogenesis. Binds a 4Fe-4S cluster, can transfer this cluster to apoproteins, and thereby intervenes in the maturation of Fe/S proteins. Could also act as a scaffold/chaperone for damaged Fe/S proteins. This chain is Fe/S biogenesis protein NfuA, found in Blochmanniella floridana.